We begin with the raw amino-acid sequence, 389 residues long: Allantoicase (389 aa).

The protein belongs to the allantoicase family.

The enzyme catalyses allantoate + H2O = (S)-ureidoglycolate + urea. It functions in the pathway nitrogen metabolism; (S)-allantoin degradation; (S)-ureidoglycolate from allantoate (aminidohydrolase route): step 1/1. Its function is as follows. Utilization of purines as secondary nitrogen sources, when primary sources are limiting. In Xenopus tropicalis (Western clawed frog), this protein is Allantoicase (allc).